Consider the following 339-residue polypeptide: Heat-inducible transcription repressor HrcA (339 aa).

The protein belongs to the HrcA family.

Negative regulator of class I heat shock genes (grpE-dnaK-dnaJ and groELS operons). Prevents heat-shock induction of these operons. The polypeptide is Heat-inducible transcription repressor HrcA (Parafrankia sp. (strain EAN1pec)).